We begin with the raw amino-acid sequence, 513 residues long: ATP synthase subunit alpha (513 aa).

ATP is bound at residue 169–176 (GDRQTGKT).

This sequence belongs to the ATPase alpha/beta chains family. F-type ATPases have 2 components, CF(1) - the catalytic core - and CF(0) - the membrane proton channel. CF(1) has five subunits: alpha(3), beta(3), gamma(1), delta(1), epsilon(1). CF(0) has three main subunits: a(1), b(2) and c(9-12). The alpha and beta chains form an alternating ring which encloses part of the gamma chain. CF(1) is attached to CF(0) by a central stalk formed by the gamma and epsilon chains, while a peripheral stalk is formed by the delta and b chains.

It is found in the cell inner membrane. The enzyme catalyses ATP + H2O + 4 H(+)(in) = ADP + phosphate + 5 H(+)(out). Its function is as follows. Produces ATP from ADP in the presence of a proton gradient across the membrane. The alpha chain is a regulatory subunit. This is ATP synthase subunit alpha from Actinobacillus succinogenes (strain ATCC 55618 / DSM 22257 / CCUG 43843 / 130Z).